The chain runs to 481 residues: Dual specificity protein kinase CLK4 (481 aa).

Disordered regions lie at residues Met-1 to His-46 and Ser-102 to Glu-143. A compositionally biased stretch (basic and acidic residues) spans His-8–Arg-24. 2 stretches are compositionally biased toward basic residues: residues Gly-25–His-34 and Val-106–Ser-136. A phosphoserine mark is found at Ser-136 and Ser-138. The region spanning Tyr-159 to Phe-475 is the Protein kinase domain. ATP contacts are provided by residues Leu-165–Val-173 and Lys-189. Catalysis depends on Asp-286, which acts as the Proton acceptor.

This sequence belongs to the protein kinase superfamily. CMGC Ser/Thr protein kinase family. Lammer subfamily. Interacts with UBL5. In terms of processing, autophosphorylates on all three types of residues. Expressed in liver, kidney, heart, muscle, brain and endothelial cells.

The protein localises to the nucleus. It carries out the reaction L-seryl-[protein] + ATP = O-phospho-L-seryl-[protein] + ADP + H(+). The enzyme catalyses L-threonyl-[protein] + ATP = O-phospho-L-threonyl-[protein] + ADP + H(+). It catalyses the reaction L-tyrosyl-[protein] + ATP = O-phospho-L-tyrosyl-[protein] + ADP + H(+). TG003 inhibits its kinase activity and affects the regulation of alternative splicing mediated by phosphorylation of SR proteins. In terms of biological role, dual specificity kinase acting on both serine/threonine and tyrosine-containing substrates. Phosphorylates serine- and arginine-rich (SR) proteins of the spliceosomal complex and may be a constituent of a network of regulatory mechanisms that enable SR proteins to control RNA splicing. Phosphorylates SRSF1 and SRSF3. Required for the regulation of alternative splicing of MAPT/TAU. Regulates the alternative splicing of tissue factor (F3) pre-mRNA in endothelial cells. In Homo sapiens (Human), this protein is Dual specificity protein kinase CLK4 (CLK4).